The primary structure comprises 461 residues: MLKIYNTLTRQKEEFKPITAGKVGMYVCGVTIYDLCHIGHGRTFVSFDVVTRYLRYLGYDLNFVRNITDIDDKIIKRANENGESCDSLTERLIGEMHADFDALNMKRPDVEPRATEFITEIIELVEKLIQRGFAYVASNGDVMFEVKKFDEYGKLSKQDLDQLQAGARVDIDSAKRSPLDFVLWKMSKPGEPTWESPWGPGRPGWHIECSAMNSSILGNHFDIHGGGSDLQFPHHENEIAQSCCAHGTQYVNTWMHSGMVMVDREKMSKSLGNFFTIRDVLQHYDAETVRYFLMSGHYRSQLNYSEDNLNQARASLERLYTSLRGLDVTAAPAGGEEYVTRFSTAMNDDFNTPEAYSVLFEMAREINRIKTESIEKASALGALMRELADIIGILHQDPEAFLQGDAAGNDDEVAEIEGLIKLRNDSRASKDWANADLARDKLNELGIVLEDGPEGTTWRRK.

Cysteine 28 contacts Zn(2+). The 'HIGH' region signature appears at 30–40 (VTIYDLCHIGH). Zn(2+)-binding residues include cysteine 209, histidine 234, and glutamate 238. The 'KMSKS' region motif lies at 266-270 (KMSKS). Position 269 (lysine 269) interacts with ATP.

This sequence belongs to the class-I aminoacyl-tRNA synthetase family. In terms of assembly, monomer. Zn(2+) is required as a cofactor.

It localises to the cytoplasm. It carries out the reaction tRNA(Cys) + L-cysteine + ATP = L-cysteinyl-tRNA(Cys) + AMP + diphosphate. In Vibrio atlanticus (strain LGP32) (Vibrio splendidus (strain Mel32)), this protein is Cysteine--tRNA ligase.